Here is a 328-residue protein sequence, read N- to C-terminus: Flotillin-like protein FloA (328 aa).

A run of 2 helical transmembrane segments spans residues M1–F21 and V26–G46.

This sequence belongs to the flotillin-like FloA family. In terms of assembly, homooligomerizes.

Its subcellular location is the cell membrane. It is found in the membrane raft. In terms of biological role, found in functional membrane microdomains (FMM) that may be equivalent to eukaryotic membrane rafts. FMMs are highly dynamic and increase in number as cells age. Flotillins are thought to be important factors in membrane fluidity. This Staphylococcus haemolyticus (strain JCSC1435) protein is Flotillin-like protein FloA.